Here is a 180-residue protein sequence, read N- to C-terminus: Adenine phosphoribosyltransferase (180 aa).

The protein belongs to the purine/pyrimidine phosphoribosyltransferase family. In terms of assembly, homodimer.

It is found in the cytoplasm. The enzyme catalyses AMP + diphosphate = 5-phospho-alpha-D-ribose 1-diphosphate + adenine. It functions in the pathway purine metabolism; AMP biosynthesis via salvage pathway; AMP from adenine: step 1/1. In terms of biological role, catalyzes a salvage reaction resulting in the formation of AMP, that is energically less costly than de novo synthesis. The chain is Adenine phosphoribosyltransferase from Actinobacillus succinogenes (strain ATCC 55618 / DSM 22257 / CCUG 43843 / 130Z).